The sequence spans 375 residues: tRNA-specific 2-thiouridylase MnmA (375 aa).

ATP-binding positions include 16-23 (GMSGGVDS) and Met-42. Residues 102–104 (NPD) form an interaction with target base in tRNA region. Catalysis depends on Cys-107, which acts as the Nucleophile. Cys-107 and Cys-203 form a disulfide bridge. Position 131 (Gly-131) interacts with ATP. Residues 153–155 (KDQ) form an interaction with tRNA region. Cys-203 acts as the Cysteine persulfide intermediate in catalysis. An interaction with tRNA region spans residues 315–316 (RY).

The protein belongs to the MnmA/TRMU family.

It is found in the cytoplasm. The catalysed reaction is S-sulfanyl-L-cysteinyl-[protein] + uridine(34) in tRNA + AH2 + ATP = 2-thiouridine(34) in tRNA + L-cysteinyl-[protein] + A + AMP + diphosphate + H(+). In terms of biological role, catalyzes the 2-thiolation of uridine at the wobble position (U34) of tRNA, leading to the formation of s(2)U34. This Pseudomonas paraeruginosa (strain DSM 24068 / PA7) (Pseudomonas aeruginosa (strain PA7)) protein is tRNA-specific 2-thiouridylase MnmA.